The following is an 89-amino-acid chain: Huwentoxin-IV (89 aa).

Positions 1–24 (MVNMKASMFLALAGLVLLFVVCYA) are cleaved as a signal peptide. Residues 25–52 (SESEEKEFSNELLSSVLAVDDNSKGEER) constitute a propeptide that is removed on maturation. Glu-53 is modified (pyrrolidone carboxylic acid (Glu); partial). Disulfide bonds link Cys-54–Cys-69, Cys-61–Cys-76, and Cys-68–Cys-83. Ile-87 carries the isoleucine amide modification.

The protein belongs to the neurotoxin 10 (Hwtx-1) family. 22 (Htx-4) subfamily. Two forms of huwentoxin-IV exist in the venom of H.schmidti, a non-N-terminally modified (HwTx-IV) and a naturally modified peptide with pyroglutamic acid residue at position 53 (mHwTx-IV). mHwTx-IV shows no observable difference with the unmodified toxin when applied to the TTX-S sodium channel of DRG neuron (IC(50)~50 nM) or when tested on hNav1.7/SCN9A (IC(50)=30.8 nM). In addition, similarly to the unmodified toxin, mHwTx-IV has only a weak affinity for lipid membranes. However, in contrast with HwTx-IV, which dissociates at moderate and high depolarization voltages (50-200 mV), mHwTx-IV inhibition of TTX-sensitive sodium channels is not reversed by strong depolarization voltages. In terms of tissue distribution, expressed by the venom gland.

The protein localises to the secreted. This lethal neurotoxin (without cyclization at position 53) inhibits neuronal voltage-gated sodium channel Nav1.2/SCN2A (IC(50)=10-150 nM), rNav1.3/SCN3A (IC(50)=338 nM), Nav1.6/SCN8A (IC(50)=117 nM), and hNav1.7/SCN9A (IC(50)=9.6-33 nM). It inhibits activation of sodium channel by trapping the voltage sensor of domain II (DIIS4) in the closed configuration. The toxin neither shifts the Nav1.7/SCN9A activation curve nor modifies the slope factor. It does not slow fast-inactivation of hNav1.7/SCN9A channels. In addition, it has only a weak affinity for lipid membranes. This toxin also exists with a pyroglutamate at position 53. The sole difference observed between modified (mHwTx-IV) and unmodified toxins is that moderate or high depolarization voltages (200 mV) permit the unmodified toxin to dissociate, whereas mHwTx-IV toxin does not dissociate, even at high depolarization voltages. These data indicate that mHwTx-IV strongly binds to voltage sensor of sodium channel even at extreme depolarization voltages. The polypeptide is Huwentoxin-IV (Cyriopagopus schmidti (Chinese bird spider)).